The chain runs to 370 residues: Prolactin-releasing peptide receptor (370 aa).

The segment at 1 to 34 (MTSLPPGTTGDPDLFSGPSPAGSTPANQSAEASE) is disordered. The Extracellular segment spans residues 1–62 (MTSLPPGTTG…LQLVHQLKGL (62 aa)). Polar residues predominate over residues 21–34 (AGSTPANQSAEASE). Residues N27 and N36 are each glycosylated (N-linked (GlcNAc...) asparagine). The chain crosses the membrane as a helical span at residues 63–83 (IVMLYSIVVVVGLVGNCLLVL). Over 84–101 (VIARVRRLHNVTNFLIGN) the chain is Cytoplasmic. A helical transmembrane segment spans residues 102–122 (LALSDVLMCAACVPLTLAYAF). At 123 to 126 (EPRG) the chain is on the extracellular side. Residues 127–147 (WVFGGGLCHLVFFLQPVTVYV) traverse the membrane as a helical segment. The cysteines at positions 134 and 211 are disulfide-linked. Residues 148–175 (SVFTLTTIAVDRYVVLVHPLRRRISLKL) lie on the Cytoplasmic side of the membrane. The chain crosses the membrane as a helical span at residues 176–196 (SAYAVLGIWALSAVLALPAAV). Residues 197-223 (HTYHVELKPHDVRLCEEFWGSQERQRQ) are Extracellular-facing. The chain crosses the membrane as a helical span at residues 224–244 (IYAWGLLLGTYLLPLLAILLS). Residues 245–276 (YVRVSVKLRNRVVPGSVTQSQADWDRARRRRT) lie on the Cytoplasmic side of the membrane. A helical membrane pass occupies residues 277-297 (FCLLVVVVVVFALCWLPLHIF). Residues 298-317 (NLLRDLDPRAIDPYAFGLVQ) are Extracellular-facing. Residues 318-338 (LLCHWLAMSSACYNPFIYAWL) form a helical membrane-spanning segment. The Cytoplasmic portion of the chain corresponds to 339–370 (HDSFREELRKMLLSWPRKIVPHGQNMTVSVVI). A required for interaction with GRIP1, GRIP2 and PICK1 region spans residues 365 to 370 (TVSVVI).

Belongs to the G-protein coupled receptor 1 family. Interacts through its C-terminal region with the PDZ domain-containing proteins GRIP1, GRIP2 and PICK1. Interacts with PDZ domains 4 and 5 of GRIP1 and with the PDZ domain of PICK1. Widely expressed, with highest levels in pituitary, cerebellum, and hypothalamus.

It localises to the cell membrane. Receptor for prolactin-releasing peptide (PrRP). Implicated in lactation, regulation of food intake and pain-signal processing. The sequence is that of Prolactin-releasing peptide receptor (Prlhr) from Rattus norvegicus (Rat).